The sequence spans 363 residues: Small ribosomal subunit biogenesis GTPase RsgA (363 aa).

A CP-type G domain is found at 112-268 (HQQVIAANID…LIDTPGMREL (157 aa)). Residues 157–160 (TKAD) and 210–218 (GSSGAGKST) contribute to the GTP site. 4 residues coordinate Zn(2+): C291, C296, H298, and C304. Residues 340-363 (RVAQNNRGKGSGKRPASVDRPGRR) form a disordered region.

It belongs to the TRAFAC class YlqF/YawG GTPase family. RsgA subfamily. In terms of assembly, monomer. Associates with 30S ribosomal subunit, binds 16S rRNA. The cofactor is Zn(2+).

The protein localises to the cytoplasm. In terms of biological role, one of several proteins that assist in the late maturation steps of the functional core of the 30S ribosomal subunit. Helps release RbfA from mature subunits. May play a role in the assembly of ribosomal proteins into the subunit. Circularly permuted GTPase that catalyzes slow GTP hydrolysis, GTPase activity is stimulated by the 30S ribosomal subunit. This is Small ribosomal subunit biogenesis GTPase RsgA from Xanthomonas campestris pv. campestris (strain 8004).